A 223-amino-acid polypeptide reads, in one-letter code: ATP phosphoribosyltransferase (223 aa).

It belongs to the ATP phosphoribosyltransferase family. Short subfamily. As to quaternary structure, heteromultimer composed of HisG and HisZ subunits.

Its subcellular location is the cytoplasm. The catalysed reaction is 1-(5-phospho-beta-D-ribosyl)-ATP + diphosphate = 5-phospho-alpha-D-ribose 1-diphosphate + ATP. The protein operates within amino-acid biosynthesis; L-histidine biosynthesis; L-histidine from 5-phospho-alpha-D-ribose 1-diphosphate: step 1/9. Its function is as follows. Catalyzes the condensation of ATP and 5-phosphoribose 1-diphosphate to form N'-(5'-phosphoribosyl)-ATP (PR-ATP). Has a crucial role in the pathway because the rate of histidine biosynthesis seems to be controlled primarily by regulation of HisG enzymatic activity. This is ATP phosphoribosyltransferase from Bordetella pertussis (strain Tohama I / ATCC BAA-589 / NCTC 13251).